The chain runs to 233 residues: Probable tetraheme cytochrome c-type (233 aa).

The signal sequence occupies residues Met1 to Gly28. Heme is bound by residues Cys39, Cys42, Met45, Cys67, Cys70, His71, Glu93, Cys131, Cys134, His135, Cys159, Cys162, His163, and His168. Positions Gln182–Glu233 are disordered. Composition is skewed to acidic residues over residues Asp191–Asp214 and Ser224–Glu233.

The protein belongs to the NapC/NirT/NrfH family. In terms of processing, binds 4 heme groups per subunit.

It is found in the periplasm. This Nitrosomonas europaea (strain ATCC 19718 / CIP 103999 / KCTC 2705 / NBRC 14298) protein is Probable tetraheme cytochrome c-type (cycX1).